A 102-amino-acid chain; its full sequence is NADH-quinone oxidoreductase subunit K (102 aa).

3 consecutive transmembrane segments (helical) span residues 5-25, 31-51, and 65-85; these read LSHYLTVSAILFTIGVFGIFL, IVILMSIELILLAVNINMVAF, and LFILTVAAAEAAIGLAILVVF.

Belongs to the complex I subunit 4L family. As to quaternary structure, NDH-1 is composed of 14 different subunits. Subunits NuoA, H, J, K, L, M, N constitute the membrane sector of the complex.

The protein localises to the cell inner membrane. The catalysed reaction is a quinone + NADH + 5 H(+)(in) = a quinol + NAD(+) + 4 H(+)(out). Functionally, NDH-1 shuttles electrons from NADH, via FMN and iron-sulfur (Fe-S) centers, to quinones in the respiratory chain. The immediate electron acceptor for the enzyme in this species is believed to be ubiquinone. Couples the redox reaction to proton translocation (for every two electrons transferred, four hydrogen ions are translocated across the cytoplasmic membrane), and thus conserves the redox energy in a proton gradient. The protein is NADH-quinone oxidoreductase subunit K of Agrobacterium fabrum (strain C58 / ATCC 33970) (Agrobacterium tumefaciens (strain C58)).